The following is a 429-amino-acid chain: Glutamate-1-semialdehyde 2,1-aminomutase (429 aa).

Lysine 265 is subject to N6-(pyridoxal phosphate)lysine.

Belongs to the class-III pyridoxal-phosphate-dependent aminotransferase family. HemL subfamily. As to quaternary structure, homodimer. Requires pyridoxal 5'-phosphate as cofactor.

It is found in the cytoplasm. The enzyme catalyses (S)-4-amino-5-oxopentanoate = 5-aminolevulinate. Its pathway is porphyrin-containing compound metabolism; protoporphyrin-IX biosynthesis; 5-aminolevulinate from L-glutamyl-tRNA(Glu): step 2/2. This Chromohalobacter salexigens (strain ATCC BAA-138 / DSM 3043 / CIP 106854 / NCIMB 13768 / 1H11) protein is Glutamate-1-semialdehyde 2,1-aminomutase.